A 359-amino-acid polypeptide reads, in one-letter code: Probable RNA methyltransferase RPD_2859 (359 aa).

E99 acts as the Proton acceptor in catalysis. The Radical SAM core domain maps to 105–330 (RFDGHTACIS…PVVVRDTQGR (226 aa)). A disulfide bridge links C112 with C336. [4Fe-4S] cluster contacts are provided by C119, C123, and C126. S-adenosyl-L-methionine is bound by residues 162 to 163 (GE), S194, 217 to 219 (SLH), and N293. C336 acts as the S-methylcysteine intermediate in catalysis.

This sequence belongs to the radical SAM superfamily. RlmN family. Requires [4Fe-4S] cluster as cofactor.

The protein localises to the cytoplasm. This chain is Probable RNA methyltransferase RPD_2859, found in Rhodopseudomonas palustris (strain BisB5).